A 139-amino-acid chain; its full sequence is ATP synthase epsilon chain (139 aa).

It belongs to the ATPase epsilon chain family. As to quaternary structure, F-type ATPases have 2 components, CF(1) - the catalytic core - and CF(0) - the membrane proton channel. CF(1) has five subunits: alpha(3), beta(3), gamma(1), delta(1), epsilon(1). CF(0) has three main subunits: a, b and c.

The protein localises to the cell inner membrane. Functionally, produces ATP from ADP in the presence of a proton gradient across the membrane. This chain is ATP synthase epsilon chain, found in Erwinia tasmaniensis (strain DSM 17950 / CFBP 7177 / CIP 109463 / NCPPB 4357 / Et1/99).